Reading from the N-terminus, the 86-residue chain is Small ribosomal subunit protein bS20 (86 aa).

This sequence belongs to the bacterial ribosomal protein bS20 family.

Functionally, binds directly to 16S ribosomal RNA. This is Small ribosomal subunit protein bS20 from Buchnera aphidicola subsp. Cinara cedri (strain Cc).